The chain runs to 510 residues: UDP-N-acetylmuramoyl-tripeptide--D-alanyl-D-alanine ligase (510 aa).

136-142 (GSSGKTS) contributes to the ATP binding site.

This sequence belongs to the MurCDEF family. MurF subfamily.

It is found in the cytoplasm. The catalysed reaction is D-alanyl-D-alanine + UDP-N-acetyl-alpha-D-muramoyl-L-alanyl-gamma-D-glutamyl-meso-2,6-diaminopimelate + ATP = UDP-N-acetyl-alpha-D-muramoyl-L-alanyl-gamma-D-glutamyl-meso-2,6-diaminopimeloyl-D-alanyl-D-alanine + ADP + phosphate + H(+). The protein operates within cell wall biogenesis; peptidoglycan biosynthesis. Involved in cell wall formation. Catalyzes the final step in the synthesis of UDP-N-acetylmuramoyl-pentapeptide, the precursor of murein. This chain is UDP-N-acetylmuramoyl-tripeptide--D-alanyl-D-alanine ligase, found in Mycobacterium bovis (strain ATCC BAA-935 / AF2122/97).